The chain runs to 173 residues: Large ribosomal subunit protein bL9 (173 aa).

This sequence belongs to the bacterial ribosomal protein bL9 family.

Functionally, binds to the 23S rRNA. This is Large ribosomal subunit protein bL9 from Rickettsia bellii (strain OSU 85-389).